Reading from the N-terminus, the 540-residue chain is Chaperonin GroEL (540 aa).

Residues 30–33 (TLGP), lysine 51, 87–91 (DGTTT), glycine 415, 479–481 (NAA), and aspartate 495 contribute to the ATP site.

This sequence belongs to the chaperonin (HSP60) family. Forms a cylinder of 14 subunits composed of two heptameric rings stacked back-to-back. Interacts with the co-chaperonin GroES.

Its subcellular location is the cytoplasm. The catalysed reaction is ATP + H2O + a folded polypeptide = ADP + phosphate + an unfolded polypeptide.. In terms of biological role, together with its co-chaperonin GroES, plays an essential role in assisting protein folding. The GroEL-GroES system forms a nano-cage that allows encapsulation of the non-native substrate proteins and provides a physical environment optimized to promote and accelerate protein folding. The polypeptide is Chaperonin GroEL (Raoultella ornithinolytica (Klebsiella ornithinolytica)).